We begin with the raw amino-acid sequence, 67 residues long: UPF0253 protein VV2574 (67 aa).

This sequence belongs to the UPF0253 family.

In Vibrio vulnificus (strain YJ016), this protein is UPF0253 protein VV2574.